Here is a 944-residue protein sequence, read N- to C-terminus: UvrABC system protein A (944 aa).

The region spanning 1–242 is the ABC transporter 1 domain; it reads MSKVDFLHIK…GKGIVKVENV (242 aa). 34-41 is a binding site for ATP; the sequence is GLSGSGKS. The C4-type; degenerate zinc finger occupies 256-283; the sequence is CPKGDFEMPKIETRLFSFNSPYGMCQNC. ABC transporter domains lie at 359–597 and 610–935; these read EEID…KYLS and SGSG…EKSY. An ATP-binding site is contributed by 643 to 650; sequence GVSGSGKS. The C4-type zinc-finger motif lies at 744-770; that stretch reads CEKCSGDGSIKIEMFFLPNVYITCDHC.

This sequence belongs to the ABC transporter superfamily. UvrA family. Forms a heterotetramer with UvrB during the search for lesions.

It localises to the cytoplasm. The UvrABC repair system catalyzes the recognition and processing of DNA lesions. UvrA is an ATPase and a DNA-binding protein. A damage recognition complex composed of 2 UvrA and 2 UvrB subunits scans DNA for abnormalities. When the presence of a lesion has been verified by UvrB, the UvrA molecules dissociate. The polypeptide is UvrABC system protein A (Mycoplasmopsis pulmonis (strain UAB CTIP) (Mycoplasma pulmonis)).